The sequence spans 114 residues: Ferredoxin (114 aa).

[3Fe-4S] cluster is bound by residues cysteine 9 and cysteine 17. [4Fe-4S] cluster contacts are provided by cysteine 21, cysteine 40, cysteine 43, and cysteine 46. A 4Fe-4S ferredoxin-type domain is found at 31–60 (RMLYINPDECVDCGACKPACRVEAIYWEGD). Position 50 (cysteine 50) interacts with [3Fe-4S] cluster.

Requires [4Fe-4S] cluster as cofactor. [3Fe-4S] cluster serves as cofactor.

In terms of biological role, ferredoxins are iron-sulfur proteins that transfer electrons in a wide variety of metabolic reactions. This chain is Ferredoxin (fdxA), found in Mycobacterium tuberculosis (strain ATCC 25618 / H37Rv).